A 299-amino-acid chain; its full sequence is Tetrahydromethanopterin S-methyltransferase subunit E (299 aa).

6 helical membrane passes run 57-79 (AISGEPVSYGLYVAVAGTIAWAL), 95-115 (GVAAVVHGAYSVSAFLGRTVG), 133-153 (IGPIVGHGFIAVFTMTLAAYL), 158-178 (LGNPFPLPLVALIFGITVGAI), 237-257 (GLCFGLIIFLDGWRSILGNII), and 262-282 (VTKTSIALLVGLLVVAVAAGI).

It belongs to the MtrE family. The complex is composed of 8 subunits; MtrA, MtrB, MtrC, MtrD, MtrE, MtrF, MtrG and MtrH.

The protein resides in the cell membrane. The enzyme catalyses 5-methyl-5,6,7,8-tetrahydromethanopterin + coenzyme M + 2 Na(+)(in) = 5,6,7,8-tetrahydromethanopterin + methyl-coenzyme M + 2 Na(+)(out). The protein operates within one-carbon metabolism; methanogenesis from CO(2); methyl-coenzyme M from 5,10-methylene-5,6,7,8-tetrahydromethanopterin: step 2/2. Part of a complex that catalyzes the formation of methyl-coenzyme M and tetrahydromethanopterin from coenzyme M and methyl-tetrahydromethanopterin. This is an energy-conserving, sodium-ion translocating step. The chain is Tetrahydromethanopterin S-methyltransferase subunit E from Methanococcus maripaludis (strain C5 / ATCC BAA-1333).